We begin with the raw amino-acid sequence, 322 residues long: Acetylglutamate kinase (322 aa).

Substrate contacts are provided by residues 89–90 (GG), Arg111, and Asn217.

It belongs to the acetylglutamate kinase family. ArgB subfamily.

The protein resides in the cytoplasm. It carries out the reaction N-acetyl-L-glutamate + ATP = N-acetyl-L-glutamyl 5-phosphate + ADP. The protein operates within amino-acid biosynthesis; L-arginine biosynthesis; N(2)-acetyl-L-ornithine from L-glutamate: step 2/4. Its function is as follows. Catalyzes the ATP-dependent phosphorylation of N-acetyl-L-glutamate. In Ehrlichia ruminantium (strain Welgevonden), this protein is Acetylglutamate kinase.